A 387-amino-acid chain; its full sequence is Patatin-02 (387 aa).

A signal peptide spans 1–23 (MATTKSFLILIVMILATTSSTFA). The region spanning 32 to 230 (LSIDGGGIKG…TVADPALLSV (199 aa)) is the PNPLA domain. The GXGXXG motif lies at 36 to 41 (GGGIKG). The short motif at 75–79 (GTSTG) is the GXSXG element. Residue Ser77 is the Nucleophile of the active site. A glycan (N-linked (GlcNAc...) asparagine) is linked at Asn115. Residue Asp216 is the Proton acceptor of the active site. The short motif at 216–218 (DGA) is the DGA/G element. Residues 361-385 (ETYEEALKRFAKLLSDRKKLRANKA) are a coiled coil.

This sequence belongs to the patatin family. As to expression, tuber and stolon.

It localises to the vacuole. In terms of biological role, probable lipolytic acyl hydrolase (LAH), an activity which is thought to be involved in the response of tubers to pathogens. The protein is Patatin-02 of Solanum tuberosum (Potato).